A 243-amino-acid polypeptide reads, in one-letter code: LTAKLGYPITDDLDIYTRLGGMVWRADTKAHNNVTGESEKNHDTGVSPVFAGGVEWAITPEIATRLEYQWTNNIGDANTIGTRPDNGLLSLGVSYRFGQGEAAPVVAPAPAPAPEVQTKHFTLKSDVLFNFNKATLKPEGQAALDQLYSQLSNLDPKDGSVVVLGYTDRIGSDAYNQGLSERRAQSVVDYLISKGIPADKISARGMGESNPVTGNTCDNVKQRAALIDCLAPDRRVEIEVKGI.

A run of 5 beta stranded transmembrane segments spans residues 1-8 (LTAKLGYP), 13-21 (LDIYTRLGG), 48-57 (PVFAGGVEWA), 62-69 (IATRLEYQ), and 88-96 (LLSLGVSYR). 4 tandem repeats follow at residues 107-108 (AP), 109-110 (AP), 111-112 (AP), and 113-114 (AP). The interval 107 to 114 (APAPAPAP) is 4 X 2 AA tandem repeats of A-P. Residues 116–243 (VQTKHFTLKS…RRVEIEVKGI (128 aa)) enclose the OmpA-like domain. An intrachain disulfide couples cysteine 217 to cysteine 229.

This sequence belongs to the outer membrane OOP (TC 1.B.6) superfamily. OmpA family. As to quaternary structure, monomer and homodimer.

It localises to the cell outer membrane. Functionally, with TolR probably plays a role in maintaining the position of the peptidoglycan cell wall in the periplasm. Acts as a porin with low permeability that allows slow penetration of small solutes; an internal gate slows down solute passage. Its function is as follows. Required for conjugation with F-type plasmids; probably serves as the mating receptor on recipient cells. In Escherichia fergusonii, this protein is Outer membrane protein A.